The following is a 500-amino-acid chain: NAD(P)H-quinone oxidoreductase chain 4, chloroplastic (500 aa).

The next 14 helical transmembrane spans lie at 4–24 (FPWL…MLFL), 35–55 (YTIC…CYNF), 87–107 (IGTI…AFPV), 113–130 (LFHF…GSFS), 134–154 (LLLF…LLSM), 167–187 (FILY…GISL), 211–231 (ILFY…IPLH), 242–262 (HYST…YGLV), 272–292 (AHSL…IYAA), 305–325 (IAYS…SITD), 330–350 (GAIL…FLAG), 386–406 (LALP…GIIT), 416–436 (ILII…LLSM), and 462–482 (LFLS…PDFV).

The protein belongs to the complex I subunit 4 family.

It localises to the plastid. It is found in the chloroplast thylakoid membrane. It carries out the reaction a plastoquinone + NADH + (n+1) H(+)(in) = a plastoquinol + NAD(+) + n H(+)(out). The catalysed reaction is a plastoquinone + NADPH + (n+1) H(+)(in) = a plastoquinol + NADP(+) + n H(+)(out). In Draba nemorosa (Woodland whitlowgrass), this protein is NAD(P)H-quinone oxidoreductase chain 4, chloroplastic.